A 305-amino-acid polypeptide reads, in one-letter code: DNA-directed RNA polymerase 35 kDa subunit (305 aa).

This sequence belongs to the poxviridae DNA-directed RNA polymerase 35 kDa subunit family. The DNA-dependent RNA polymerase used for intermediate and late genes expression consists of eight subunits 147 kDa, 133 kDa, 35 kDa, 30 kDa, 22 kDa, 19 kDa, 18 kDa and 7 kDa totalling more than 500 kDa in mass. The same holoenzyme, with the addition of the transcription-specificity factor RAP94, is used for early gene expression.

The protein resides in the virion. The catalysed reaction is RNA(n) + a ribonucleoside 5'-triphosphate = RNA(n+1) + diphosphate. Part of the DNA-dependent RNA polymerase which catalyzes the transcription of viral DNA into RNA using the four ribonucleoside triphosphates as substrates. Responsible for the transcription of early, intermediate and late genes. DNA-dependent RNA polymerase associates with the early transcription factor (ETF), itself composed of D6 and A7, thereby allowing the early genes transcription. Late transcription, and probably also intermediate transcription, require newly synthesized RNA polymerase. This Homo sapiens (Human) protein is DNA-directed RNA polymerase 35 kDa subunit (OPG156).